A 720-amino-acid chain; its full sequence is Replication restart protein PriA (720 aa).

The region spanning 200–366 is the Helicase ATP-binding domain; it reads ILMKNCFTSW…LHKKCFYIKF (167 aa). 213-220 is an ATP binding site; it reads KNNFYLKV. The DEAH box signature appears at 309–312; that stretch reads NQEH. Zn(2+) is bound by residues cysteine 425, cysteine 428, cysteine 434, cysteine 437, cysteine 452, cysteine 455, cysteine 465, and cysteine 468.

This sequence belongs to the helicase family. PriA subfamily. As to quaternary structure, component of the replication restart primosome. Zn(2+) is required as a cofactor.

The enzyme catalyses Couples ATP hydrolysis with the unwinding of duplex DNA by translocating in the 3'-5' direction.. It carries out the reaction ATP + H2O = ADP + phosphate + H(+). In terms of biological role, initiates the restart of stalled replication forks, which reloads the replicative helicase on sites other than the origin of replication. Recognizes and binds to abandoned replication forks and remodels them to uncover a helicase loading site. Promotes assembly of the primosome at these replication forks. The chain is Replication restart protein PriA from Buchnera aphidicola subsp. Schizaphis graminum (strain Sg).